A 130-amino-acid chain; its full sequence is Small ribosomal subunit protein uS8 (130 aa).

It belongs to the universal ribosomal protein uS8 family.

It is found in the cytoplasm. The polypeptide is Small ribosomal subunit protein uS8 (RPS15A) (Daucus carota (Wild carrot)).